Here is an 81-residue protein sequence, read N- to C-terminus: Probable antitoxin MazE2 (81 aa).

In terms of assembly, forms a complex with cognate toxin MazF2.

Antitoxin component of a type II toxin-antitoxin (TA) system. This Mycobacterium tuberculosis (strain ATCC 25618 / H37Rv) protein is Probable antitoxin MazE2 (mazE2).